The sequence spans 557 residues: Fatty acyl-CoA hydrolase precursor, medium chain (557 aa).

The first 25 residues, 1 to 25 (MATEKNTLLSLILTAGITALVATGQ), serve as a signal peptide directing secretion. An intrachain disulfide couples cysteine 93 to cysteine 122. Catalysis depends on serine 227, which acts as the Acyl-ester intermediate. Active-site charge relay system residues include glutamate 345 and histidine 460. The N-linked (GlcNAc...) asparagine glycan is linked to asparagine 476.

The protein belongs to the type-B carboxylesterase/lipase family. In terms of tissue distribution, highest levels in uropygial gland, much lower in liver and kidney.

In terms of biological role, fatty acid biosynthesis chain termination and release of the free fatty acid product is achieved by hydrolysis of the thio ester by a thioesterase. This thioesterase may be associated with peroxisome proliferation and may play a role in the production of 3-hydroxy fatty acid diester pheromones. In Anas platyrhynchos (Mallard), this protein is Fatty acyl-CoA hydrolase precursor, medium chain.